Consider the following 631-residue polypeptide: Nucleoside triphosphatase I (631 aa).

The Helicase ATP-binding domain occupies 42-204; the sequence is FLGLDSMHSL…TMLVNLLRPG (163 aa). 55-62 contributes to the ATP binding site; the sequence is HETGVGKT. A DEXH box motif is present at residues 141 to 144; the sequence is DECH. Positions 367–532 constitute a Helicase C-terminal domain; it reads KFIDVCLGIL…EFVQLFRVFK (166 aa). Residues 457 to 524 are binding to the cap-specific mRNA (nucleoside-2'-O-)-methyltransferase; it reads DIFILDMTWN…EIIQSKSKEF (68 aa).

This sequence belongs to the helicase family. NPH I subfamily. Monomer. Interacts (via C-terminus) with RAP94/OPG109 (via N-terminus). Interacts with the cap-specific mRNA (nucleoside-2'-O-)-methyltransferase OPG102.

Its subcellular location is the virion. The enzyme catalyses a ribonucleoside 5'-triphosphate + H2O = a ribonucleoside 5'-diphosphate + phosphate + H(+). In terms of biological role, DNA-dependent ATPase that acts as a 5' to 3' translocase on single-stranded DNA and thereby plays a role in transcription termination of viral early genes. Uses forward translocation in concert with the viral RNA polymerase RAP94/OPG109 subunit and the capping enzyme/VTF to catalyze release of UUUUUNU-containing nascent RNA from the elongation complex. In addition, acts as a positive elongation factor to assist transcription through problematic sequences. In Vaccinia virus (strain Copenhagen) (VACV), this protein is Nucleoside triphosphatase I (OPG123).